Consider the following 375-residue polypeptide: Eukaryotic translation initiation factor 3 subunit F (375 aa).

Positions 30–166 (VVIQPQALFS…TRAYISAPVG (137 aa)) constitute an MPN domain. Residues 307–375 (LGGESGSGES…EAQNGKEEKK (69 aa)) are disordered. The span at 323 to 332 (QRGGKGGRGG) shows a compositional bias: gly residues. Composition is skewed to basic and acidic residues over residues 336-345 (TQERSGEEAR) and 358-375 (RSYE…EEKK).

It belongs to the eIF-3 subunit F family. In terms of assembly, component of the eukaryotic translation initiation factor 3 (eIF-3) complex.

It is found in the cytoplasm. Component of the eukaryotic translation initiation factor 3 (eIF-3) complex, which is involved in protein synthesis of a specialized repertoire of mRNAs and, together with other initiation factors, stimulates binding of mRNA and methionyl-tRNAi to the 40S ribosome. The eIF-3 complex specifically targets and initiates translation of a subset of mRNAs involved in cell proliferation. This chain is Eukaryotic translation initiation factor 3 subunit F, found in Aspergillus niger (strain ATCC MYA-4892 / CBS 513.88 / FGSC A1513).